Consider the following 331-residue polypeptide: Lipoyl synthase (331 aa).

The disordered stretch occupies residues 1–20; that stretch reads MTTETNPAVTPAYNPSEKQK. Positions 71, 76, 82, 97, 101, 104, and 311 each coordinate [4Fe-4S] cluster. Residues 82–300 enclose the Radical SAM core domain; the sequence is CFGKGTATFM…EEEAYKMGFA (219 aa).

This sequence belongs to the radical SAM superfamily. Lipoyl synthase family. [4Fe-4S] cluster is required as a cofactor.

The protein localises to the cytoplasm. It catalyses the reaction [[Fe-S] cluster scaffold protein carrying a second [4Fe-4S](2+) cluster] + N(6)-octanoyl-L-lysyl-[protein] + 2 oxidized [2Fe-2S]-[ferredoxin] + 2 S-adenosyl-L-methionine + 4 H(+) = [[Fe-S] cluster scaffold protein] + N(6)-[(R)-dihydrolipoyl]-L-lysyl-[protein] + 4 Fe(3+) + 2 hydrogen sulfide + 2 5'-deoxyadenosine + 2 L-methionine + 2 reduced [2Fe-2S]-[ferredoxin]. It functions in the pathway protein modification; protein lipoylation via endogenous pathway; protein N(6)-(lipoyl)lysine from octanoyl-[acyl-carrier-protein]: step 2/2. Its function is as follows. Catalyzes the radical-mediated insertion of two sulfur atoms into the C-6 and C-8 positions of the octanoyl moiety bound to the lipoyl domains of lipoate-dependent enzymes, thereby converting the octanoylated domains into lipoylated derivatives. The polypeptide is Lipoyl synthase (Janthinobacterium sp. (strain Marseille) (Minibacterium massiliensis)).